The chain runs to 416 residues: Solute carrier family 25 member 46 (416 aa).

A compositionally biased stretch (basic and acidic residues) spans 1–13; that stretch reads MQPRRPDRFDGLE. The tract at residues 1–91 is disordered; that stretch reads MQPRRPDRFD…GEESSSSSSG (91 aa). Over residues 37–49 the composition is skewed to polar residues; it reads SFSSSGDLSQHWV. Residues 82-91 are compositionally biased toward low complexity; that stretch reads GEESSSSSSG. The stretch at 94–185 is one Solcar 1 repeat; it reads HLNRFAGFGI…GMLSEFTHLP (92 aa). The next 6 membrane-spanning stretches (helical) occupy residues 101–121, 161–181, 197–217, 256–276, 312–332, and 381–401; these read FGIGLASLFTENVLAHPCIVL, MGSTFIVQGISLGAEGMLSEF, IGGHLLLKGLVYVIVTPFYSA, LLPLLVLTFPTVLHGILHYII, FPELIANFAASLCADVLLYPL, and LGFYKGFGAVVVQYTLHAIVL. A Solcar 2 repeat occupies 309–414; sequence EDYFPELIAN…KIIYSSVVQT (106 aa).

It belongs to the mitochondrial carrier (TC 2.A.29) family.

The protein localises to the mitochondrion outer membrane. Its function is as follows. May play a role in mitochondrial dynamics by controlling mitochondrial membrane fission. The polypeptide is Solute carrier family 25 member 46 (slc25a46) (Xenopus tropicalis (Western clawed frog)).